The primary structure comprises 140 residues: Large ribosomal subunit protein bL17 (140 aa).

It belongs to the bacterial ribosomal protein bL17 family. As to quaternary structure, part of the 50S ribosomal subunit. Contacts protein L32.

This Rhizobium etli (strain CIAT 652) protein is Large ribosomal subunit protein bL17.